The following is a 628-amino-acid chain: Exonuclease V, mitochondrial (628 aa).

A mitochondrion-targeting transit peptide spans 1–21 (MSRFWHFKKFYFTSCYSMQRM). Residues 37 to 58 (TSEHEQVQSISKEESRSLSSND) are disordered. Residues 38–52 (SEHEQVQSISKEESR) show a composition bias toward basic and acidic residues. 4 residues coordinate [4Fe-4S] cluster: Cys-164, Cys-586, Cys-589, and Cys-595.

Belongs to the EXO5 family. As to quaternary structure, monomer. Requires Mg(2+) as cofactor. [4Fe-4S] cluster serves as cofactor.

The protein resides in the mitochondrion. In terms of biological role, single strand DNA specific 5' exonuclease involved in mitochondrial DNA replication and recombination. Releases dinucleotides as main products of catalysis. Has the capacity to slide across 5'double-stranded DNA or 5'RNA sequences and resumes cutting two nucleotides downstream of the double-stranded-to-single-stranded junction or RNA-to-DNA junction, respectively. This is Exonuclease V, mitochondrial (DEM1) from Candida albicans (strain SC5314 / ATCC MYA-2876) (Yeast).